The following is a 508-amino-acid chain: Hydroxymethylglutaryl-CoA synthase, mitochondrial (508 aa).

A mitochondrion-targeting transit peptide spans 1–37; sequence MQRLLTPVRQVLQVKRVMQEASLLPARLLPAAHPSFS. An N6-succinyllysine modification is found at Lys52. (3S)-3-hydroxy-3-methylglutaryl-CoA is bound by residues Glu80 and Ala81. The active-site Proton donor/acceptor is the Glu132. 3 residues coordinate (3S)-3-hydroxy-3-methylglutaryl-CoA: Cys166, Asn204, and Thr208. Catalysis depends on Cys166, which acts as the Acyl-thioester intermediate. At Lys243 the chain carries N6-acetyllysine. Lys256 is subject to N6-acetyllysine; alternate. Lys256 carries the N6-succinyllysine; alternate modification. Residues Ser258 and His301 each coordinate (3S)-3-hydroxy-3-methylglutaryl-CoA. The active-site Proton donor/acceptor is His301. N6-acetyllysine is present on Lys306. Lys310 contacts (3S)-3-hydroxy-3-methylglutaryl-CoA. Lys310 is subject to N6-acetyllysine; alternate. Lys310 is modified (N6-succinyllysine; alternate). N6-succinyllysine is present on Lys333. N6-acetyllysine; alternate occurs at positions 342, 350, 354, and 358. N6-succinyllysine; alternate occurs at positions 342, 350, 354, and 358. 2 residues coordinate (3S)-3-hydroxy-3-methylglutaryl-CoA: Asn380 and Ser414. Ser433 is subject to Phosphoserine. Lys437 is modified (N6-acetyllysine). Ser440 is subject to Phosphoserine. N6-acetyllysine; alternate is present on Lys447. An N6-succinyllysine; alternate modification is found at Lys447. A Phosphoserine modification is found at Ser456. The residue at position 473 (Lys473) is an N6-acetyllysine; alternate. Lys473 carries the post-translational modification N6-succinyllysine; alternate. Ser477 is subject to Phosphoserine.

This sequence belongs to the thiolase-like superfamily. HMG-CoA synthase family. As to quaternary structure, homodimer. In terms of processing, succinylated. Desuccinylated by SIRT5. Succinylation, at least at Lys-310, inhibits the enzymatic activity.

The protein localises to the mitochondrion. It catalyses the reaction acetoacetyl-CoA + acetyl-CoA + H2O = (3S)-3-hydroxy-3-methylglutaryl-CoA + CoA + H(+). It participates in metabolic intermediate biosynthesis; (R)-mevalonate biosynthesis; (R)-mevalonate from acetyl-CoA: step 2/3. In terms of biological role, catalyzes the first irreversible step in ketogenesis, condensing acetyl-CoA to acetoacetyl-CoA to form HMG-CoA, which is converted by HMG-CoA reductase (HMGCR) into mevalonate. The polypeptide is Hydroxymethylglutaryl-CoA synthase, mitochondrial (HMGCS2) (Bos taurus (Bovine)).